A 146-amino-acid chain; its full sequence is Hemoglobin subunit beta (146 aa).

Positions 2–146 constitute a Globin domain; that stretch reads HWTAEEKQLI…VAHALARKYH (145 aa). The heme b site is built by His63 and His92.

Belongs to the globin family. As to quaternary structure, heterotetramer of two alpha chains and two beta chains. As to expression, red blood cells.

Functionally, involved in oxygen transport from the lung to the various peripheral tissues. The chain is Hemoglobin subunit beta (HBB) from Branta canadensis (Canada goose).